Here is a 568-residue protein sequence, read N- to C-terminus: MRQTMTFIPTLKEVPADAEVKSHQLLLRAGFIRQTASGIYSYLPLATLMLRKIETIIREELEAIGAAELLMPALQPAELWQESGRWNDYGPELMRLKDRASRDFALGPTHEEVITALLRDEVKSYKRLPLTLYQIQTKFRDEKRPRFGLLRGREFIMKDAYSFHATSESLDEVYNLMHQAYSNIFTRCGLEFRSVIADSGSIGGNESKEFMALSDIGEDTIAYSDASDYAANTEMAPVLYMEKKSHELEKDLEKVATPDQKSITDIVGFLEVPIEKTMKSMLYQVDDEVIMVLVRGDHEVNDIKIKNALDATNVELVDPAVAVELLGANFGSLGPINVPENMRVFADNAVKDIVNAVVGANEDGFHYINVNPDRDFSVTSYFDLRMIQVGDLSPDGQGVIKFAEGIEVGHIFKLGTKYSEAMNATILDENGRAQPIIMGCYGIGVSRILSAIAEQSNDENGFVWDKQISPFDLHLIPVNMKSEEQVAFAETLYTSLQDAGFSVLIDDRAERAGVKFADADLIGLPIRITVGKKAAEGVVEVKIRKTGEMIEVRQDELLNTLPILFGDK.

Belongs to the class-II aminoacyl-tRNA synthetase family. ProS type 1 subfamily. In terms of assembly, homodimer.

It is found in the cytoplasm. The catalysed reaction is tRNA(Pro) + L-proline + ATP = L-prolyl-tRNA(Pro) + AMP + diphosphate. In terms of biological role, catalyzes the attachment of proline to tRNA(Pro) in a two-step reaction: proline is first activated by ATP to form Pro-AMP and then transferred to the acceptor end of tRNA(Pro). As ProRS can inadvertently accommodate and process non-cognate amino acids such as alanine and cysteine, to avoid such errors it has two additional distinct editing activities against alanine. One activity is designated as 'pretransfer' editing and involves the tRNA(Pro)-independent hydrolysis of activated Ala-AMP. The other activity is designated 'posttransfer' editing and involves deacylation of mischarged Ala-tRNA(Pro). The misacylated Cys-tRNA(Pro) is not edited by ProRS. The chain is Proline--tRNA ligase from Listeria monocytogenes serovar 1/2a (strain ATCC BAA-679 / EGD-e).